The sequence spans 164 residues: Ribonuclease H (164 aa).

Residues 9–150 (DMPRVTIYTD…ADTLANAATD (142 aa)) form the RNase H type-1 domain. Residues aspartate 18, glutamate 56, aspartate 78, and aspartate 142 each contribute to the Mg(2+) site.

This sequence belongs to the RNase H family. Monomer. Mg(2+) serves as cofactor.

Its subcellular location is the cytoplasm. The enzyme catalyses Endonucleolytic cleavage to 5'-phosphomonoester.. In terms of biological role, endonuclease that specifically degrades the RNA of RNA-DNA hybrids. This Chromohalobacter salexigens (strain ATCC BAA-138 / DSM 3043 / CIP 106854 / NCIMB 13768 / 1H11) protein is Ribonuclease H.